A 126-amino-acid chain; its full sequence is Histone H2B (126 aa).

Residues 1–12 show a composition bias toward low complexity; sequence MPEPAKSAPAAK. The disordered stretch occupies residues 1–35; it reads MPEPAKSAPAAKKGSKKAVSKVQKKDGKKRRKSRK. N6-acetyllysine occurs at positions 6 and 13. A Phosphoserine modification is found at S15. Residues K16 and K21 each carry the N6-acetyllysine modification. S113 is a glycosylation site (O-linked (GlcNAc) serine). Residue K121 forms a Glycyl lysine isopeptide (Lys-Gly) (interchain with G-Cter in ubiquitin) linkage.

This sequence belongs to the histone H2B family. As to quaternary structure, the nucleosome is a histone octamer containing two molecules each of H2A, H2B, H3 and H4 assembled in one H3-H4 heterotetramer and two H2A-H2B heterodimers. The octamer wraps approximately 147 bp of DNA. Monoubiquitination of Lys-121 by BRE1 gives a specific tag for epigenetic transcriptional activation and is also prerequisite for histone H3 'Lys-4' and 'Lys-79' methylation. In terms of processing, phosphorylated on Ser-15 during apoptosis; which facilitates apoptotic chromatin condensation. Post-translationally, glcNAcylation at Ser-113 promotes monoubiquitination of Lys-121. It fluctuates in response to extracellular glucose, and associates with transcribed genes. Expressed by the skin granular glands.

Its subcellular location is the nucleus. It localises to the secreted. The protein resides in the chromosome. In terms of biological role, core component of nucleosome. Nucleosomes wrap and compact DNA into chromatin, limiting DNA accessibility to the cellular machineries which require DNA as a template. Histones thereby play a central role in transcription regulation, DNA repair, DNA replication and chromosomal stability. DNA accessibility is regulated via a complex set of post-translational modifications of histones, also called histone code, and nucleosome remodeling. Its function is as follows. Has antibacterial activity against the Gram-negative bacteria E.coli and the Gram-positive bacteria S.aureus. This chain is Histone H2B, found in Zhangixalus schlegelii (Japanese gliding frog).